Here is a 367-residue protein sequence, read N- to C-terminus: Phosphoribosylaminoimidazole-succinocarboxamide synthase (367 aa).

It belongs to the SAICAR synthetase family.

It catalyses the reaction 5-amino-1-(5-phospho-D-ribosyl)imidazole-4-carboxylate + L-aspartate + ATP = (2S)-2-[5-amino-1-(5-phospho-beta-D-ribosyl)imidazole-4-carboxamido]succinate + ADP + phosphate + 2 H(+). The protein operates within purine metabolism; IMP biosynthesis via de novo pathway; 5-amino-1-(5-phospho-D-ribosyl)imidazole-4-carboxamide from 5-amino-1-(5-phospho-D-ribosyl)imidazole-4-carboxylate: step 1/2. The chain is Phosphoribosylaminoimidazole-succinocarboxamide synthase from Shewanella baltica (strain OS185).